A 431-amino-acid chain; its full sequence is MSVSAHAAQKMPAPSSAMMRPVMILAGGTGGHIFPGLAVAKVLRARGVPVTWLGADDAMETRLVPQHDIPIDTLAISGLRGKGVVKLLGAPVRVMRAVRAAGFVLRKRRPRAVISFGGFAAGPGGLAARLLGAPLLVHEQNRAPGMTNKVLSRFARRVLTGFPGSFAGEEAVGNPVRAEIAALPAPADRLVGRTGPVRVLVLGGSQGARALNQAVPTALAALGHPEVELRHQCGEKLRAEAEAAYLQAGVNASVEPFIADMAAAYAWADLVVCRAGASTLAELCAAGVGSVLVPFAAAVDDHQTRNAEYLVGADAAVLLKQDDSLAVRLQQVLQTLLADPTRRLSMANAARTLAKPDAAERIADIILQEAGSGDGQPPAVQERAGLGIRNKQTHKQGSMQTSVNGDRSAQLIATNPQSRLPNPGASAGGAP.

Residues 29 to 31 (TGG), asparagine 141, arginine 177, serine 205, isoleucine 258, and glutamine 303 each bind UDP-N-acetyl-alpha-D-glucosamine. Residues 370–431 (AGSGDGQPPA…NPGASAGGAP (62 aa)) form a disordered region. Residues 395–420 (KQGSMQTSVNGDRSAQLIATNPQSRL) show a composition bias toward polar residues.

It belongs to the glycosyltransferase 28 family. MurG subfamily.

It localises to the cell inner membrane. The catalysed reaction is di-trans,octa-cis-undecaprenyl diphospho-N-acetyl-alpha-D-muramoyl-L-alanyl-D-glutamyl-meso-2,6-diaminopimeloyl-D-alanyl-D-alanine + UDP-N-acetyl-alpha-D-glucosamine = di-trans,octa-cis-undecaprenyl diphospho-[N-acetyl-alpha-D-glucosaminyl-(1-&gt;4)]-N-acetyl-alpha-D-muramoyl-L-alanyl-D-glutamyl-meso-2,6-diaminopimeloyl-D-alanyl-D-alanine + UDP + H(+). The protein operates within cell wall biogenesis; peptidoglycan biosynthesis. Its function is as follows. Cell wall formation. Catalyzes the transfer of a GlcNAc subunit on undecaprenyl-pyrophosphoryl-MurNAc-pentapeptide (lipid intermediate I) to form undecaprenyl-pyrophosphoryl-MurNAc-(pentapeptide)GlcNAc (lipid intermediate II). The sequence is that of UDP-N-acetylglucosamine--N-acetylmuramyl-(pentapeptide) pyrophosphoryl-undecaprenol N-acetylglucosamine transferase from Xanthomonas euvesicatoria pv. vesicatoria (strain 85-10) (Xanthomonas campestris pv. vesicatoria).